Consider the following 572-residue polypeptide: Isocitrate dehydrogenase kinase/phosphatase (572 aa).

ATP contacts are provided by residues 317–323 (APGVRGM) and K338. The active site involves D373.

It belongs to the AceK family.

The protein resides in the cytoplasm. It carries out the reaction L-seryl-[isocitrate dehydrogenase] + ATP = O-phospho-L-seryl-[isocitrate dehydrogenase] + ADP + H(+). Functionally, bifunctional enzyme which can phosphorylate or dephosphorylate isocitrate dehydrogenase (IDH) on a specific serine residue. This is a regulatory mechanism which enables bacteria to bypass the Krebs cycle via the glyoxylate shunt in response to the source of carbon. When bacteria are grown on glucose, IDH is fully active and unphosphorylated, but when grown on acetate or ethanol, the activity of IDH declines drastically concomitant with its phosphorylation. This chain is Isocitrate dehydrogenase kinase/phosphatase, found in Ectopseudomonas mendocina (strain ymp) (Pseudomonas mendocina).